A 64-amino-acid chain; its full sequence is Beta-defensin 5 (64 aa).

The signal sequence occupies residues 1–23 (MKIHYLLFAFLLVLLSPLAGVFS). Cystine bridges form between Cys-32-Cys-60, Cys-39-Cys-53, and Cys-43-Cys-61.

Belongs to the beta-defensin family.

It is found in the secreted. Its function is as follows. Has antibacterial activity. This is Beta-defensin 5 (Defb5) from Mus musculus (Mouse).